A 339-amino-acid chain; its full sequence is uncharacterized protein (339 aa).

This is an uncharacterized protein from Treponema pallidum (strain Nichols).